The following is a 62-amino-acid chain: U-myrmeciitoxin(01)-Mg3a (62 aa).

Positions 1 to 24 (MKTTVILLLAIAIIFAIMTTLTSA) are cleaved as a signal peptide.

Expressed by the venom gland.

The protein resides in the secreted. In terms of biological role, may have antimicrobial properties, like most ant linear peptides. The sequence is that of U-myrmeciitoxin(01)-Mg3a from Myrmecia gulosa (Red bulldog ant).